A 31-amino-acid polypeptide reads, in one-letter code: Ranatuerin-2PL (31 aa).

A disulfide bridge connects residues Cys23 and Cys29.

In terms of tissue distribution, expressed by the skin glands.

The protein localises to the secreted. Its function is as follows. Antimicrobial activity against Gram-negative bacterium E.coli. The protein is Ranatuerin-2PL of Lithobates palustris (Pickerel frog).